A 1488-amino-acid chain; its full sequence is Eukaryotic translation initiation factor 4G (1488 aa).

Disordered stretches follow at residues 196 to 320 (VQHR…GQTS), 337 to 367 (DSEK…GKSE), and 415 to 707 (THQI…MTEA). Basic and acidic residues-rich tracts occupy residues 216–244 (VSEK…EKHP) and 274–299 (ADEK…RNDT). Polar residues-rich tracts occupy residues 300-310 (KNLPQQPQSAS), 345-360 (SKVS…SSIS), 448-464 (SLAT…SFVT), and 473-495 (CTTS…TQTL). Residues 496 to 520 (SASVDASDVSEVNSGTSSESTSQST) show a composition bias toward low complexity. A compositionally biased stretch (basic and acidic residues) spans 555-566 (QVKHADGAKDES). The segment covering 627 to 646 (QEQSESVATSDGADSSSTVD) has biased composition (polar residues). The segment covering 651-671 (LPEESEREVMCEDDGKKKVEP) has biased composition (basic and acidic residues). The span at 683 to 696 (PKLQSSDSGNQASA) shows a compositional bias: polar residues. Residues 709–721 (GRKKYSRDFLLTF) form an EIF4E-binding region. Residues 753-784 (DREPHPSSARGSDRPTSRGDRRGPAMDDDKWL) are compositionally biased toward basic and acidic residues. Disordered regions lie at residues 753–795 (DREP…PNRD), 974–1000 (RGER…EREE), and 1107–1299 (WQQR…SEEE). The region spanning 883–1106 (QRQLKAILNK…RDSIDLRKNK (224 aa)) is the MIF4G domain. Acidic residues predominate over residues 978 to 989 (EEAEADKTEEEG). 4 stretches are compositionally biased toward basic and acidic residues: residues 990-1000 (EIKQTKEEREE), 1111-1132 (RKVD…ERHA), 1181-1191 (IRYEQERHQFD), and 1254-1267 (TRED…DRFS). Residues 1273 to 1294 (AAQSASSSHRPASQEGRSGNKS) are compositionally biased toward polar residues. Positions 1299-1423 (ELREKSIATI…VLQDVGKLIE (125 aa)) constitute an MI domain.

This sequence belongs to the eukaryotic initiation factor 4G family. As to quaternary structure, EIF4F is a multi-subunit complex, the composition of which varies with external and internal environmental conditions. It is composed of at least EIF4A, EIF4E and EIF4G. In higher plants two isoforms of EIF4F have been identified, named isoform EIF4F and isoform EIF(iso)4F. Isoform EIF4F has subunits p220 and p26, whereas isoform EIF(iso)4F has subunits p82 and p28.

Functionally, component of the protein complex eIF4F, which is involved in the recognition of the mRNA cap, ATP-dependent unwinding of 5'-terminal secondary structure and recruitment of mRNA to the ribosome. The protein is Eukaryotic translation initiation factor 4G of Triticum aestivum (Wheat).